Here is an 86-residue protein sequence, read N- to C-terminus: Photosystem I reaction center subunit PsaK 1 (86 aa).

2 helical membrane-spanning segments follow: residues 14 to 34 (LSWSPKVAGVMIACNILAIAF) and 61 to 81 (AVLGTASFGHILGAGVILGLA).

It belongs to the PsaG/PsaK family.

The protein resides in the cellular thylakoid membrane. This is Photosystem I reaction center subunit PsaK 1 (psaK1) from Synechocystis sp. (strain ATCC 27184 / PCC 6803 / Kazusa).